The primary structure comprises 325 residues: MRILFSADHHIKLGQDKVPKEWQKRRFLMLGERLNDIFHNHNCDLHIAGGDILDVADPSSEEIELLEQFMSRLDHPGKIFTGNHEMLTKTISCLYHYAGVINKVTSGKWEVITKPYRSPEFDIVPYDEIHKAKWKPPVSKLCFTHVRGEIPPHVKPEIDLTKYNCYDTVIAGDLHSYTNSQTIGSTRLLYPGSPLTTSFHRERTKGTNGCFIIDTDTLKVEWIELGDLPQLIRKTIGAGEEMEPSDYDRVVYEVTGDVVQLKSIKDSDLLDKKINHRVTKDAKLNLVDLDMLGELELYFREVEKLSQGDIDRILARAAKYVKDYN.

Could consist of two subunits: D13 and D12.

Its function is as follows. Possible exonuclease involved in phage DNA recombination, replication, and repair. The protein is Probable exonuclease subunit 1 (D12) of Escherichia coli (Enterobacteria phage T5).